A 102-amino-acid chain; its full sequence is uncharacterized protein (102 aa).

The N-terminal stretch at 1-19 is a signal peptide; that stretch reads MFLFCFVLFCSLVFPLARG.

This is an uncharacterized protein from Saccharomyces cerevisiae (strain ATCC 204508 / S288c) (Baker's yeast).